The sequence spans 1208 residues: Urease accessory protein 2 (1208 aa).

Coiled-coil stretches lie at residues 187-362 (RDKI…EKAA) and 400-469 (IKAL…MHEQ). The 111-residue stretch at 523 to 633 (DGVFGPLYDL…ICEDLQTAAH (111 aa)) folds into the SMC hinge domain. Coiled-coil stretches lie at residues 688-771 (HIEV…YEEE) and 817-903 (NRLE…VQTQ). The disordered stretch occupies residues 748-773 (ESSLEEAEGASRDAKAKRASYEEELR). Residues 756–773 (GASRDAKAKRASYEEELR) show a composition bias toward basic and acidic residues.

The protein belongs to the SMC family. SMC3 subfamily. Component of cohesin complexes.

It is found in the nucleus. Central component of cohesin, a complex required for chromosome cohesion during the cell cycle. The cohesin complex may form a large proteinaceous ring within which sister chromatids can be trapped. At anaphase, the complex is cleaved and dissociates from chromatin, allowing sister chromatids to segregate. Cohesion is coupled to DNA replication and is involved in DNA repair. The cohesin complex also plays an important role in spindle pole assembly during mitosis and in chromosomes movement. Is unrelated to urease function in C.neoformans. This is Urease accessory protein 2 from Cryptococcus neoformans var. grubii serotype A (strain H99 / ATCC 208821 / CBS 10515 / FGSC 9487) (Filobasidiella neoformans var. grubii).